We begin with the raw amino-acid sequence, 129 residues long: Glycine cleavage system H protein (129 aa).

The region spanning 23–104 (TVTVGITQHA…SYSAWLFKLK (82 aa)) is the Lipoyl-binding domain. Lys64 carries the N6-lipoyllysine modification.

The protein belongs to the GcvH family. In terms of assembly, the glycine cleavage system is composed of four proteins: P, T, L and H. Requires (R)-lipoate as cofactor.

Its function is as follows. The glycine cleavage system catalyzes the degradation of glycine. The H protein shuttles the methylamine group of glycine from the P protein to the T protein. This is Glycine cleavage system H protein from Nitrosomonas eutropha (strain DSM 101675 / C91 / Nm57).